A 152-amino-acid polypeptide reads, in one-letter code: 3-hydroxyacyl-[acyl-carrier-protein] dehydratase FabZ (152 aa).

The active site involves His-58.

The protein belongs to the thioester dehydratase family. FabZ subfamily.

The protein resides in the cytoplasm. It carries out the reaction a (3R)-hydroxyacyl-[ACP] = a (2E)-enoyl-[ACP] + H2O. Involved in unsaturated fatty acids biosynthesis. Catalyzes the dehydration of short chain beta-hydroxyacyl-ACPs and long chain saturated and unsaturated beta-hydroxyacyl-ACPs. In Prochlorococcus marinus subsp. pastoris (strain CCMP1986 / NIES-2087 / MED4), this protein is 3-hydroxyacyl-[acyl-carrier-protein] dehydratase FabZ.